Consider the following 208-residue polypeptide: N-(5'-phosphoribosyl)anthranilate isomerase (208 aa).

The protein belongs to the TrpF family.

The enzyme catalyses N-(5-phospho-beta-D-ribosyl)anthranilate = 1-(2-carboxyphenylamino)-1-deoxy-D-ribulose 5-phosphate. It participates in amino-acid biosynthesis; L-tryptophan biosynthesis; L-tryptophan from chorismate: step 3/5. This chain is N-(5'-phosphoribosyl)anthranilate isomerase, found in Staphylococcus haemolyticus (strain JCSC1435).